The chain runs to 312 residues: MATSANLDIGAQLIVEECPSSYISGMPDIKLEHQLDPNPDEGAAQGVAMGMKFILPNRFDMNVCSRFVKSLNEEDSKNIQDQVNSDLEVASVLFKAECNIHTSPSPGIQVRHVYTPSTTKHFSPIKQSTTLTNKHRGNEVSTTPLLANSLSAHQLAAQGEMLYLATRIEQENVINHTDEEGFTPLMWAAAHGQIAVVEFLLQNGADPQLLGKGRESALSLACSKGYTDIVKMLLDCGVDVNEYDWNGGTPLLYAVHGNHVKCVKMLLENGADPTIETDSGYNSMDLAVALGYRGVQQAIESHLLKLLQNIRE.

ANK repeat units lie at residues 147 to 179 (ANSLSAHQLAAQGEMLYLATRIEQENVINHTDE), 180 to 212 (EGFTPLMWAAAHGQIAVVEFLLQNGADPQLLGK), 213 to 245 (GRESALSLACSKGYTDIVKMLLDCGVDVNEYDW), 246 to 278 (NGGTPLLYAVHGNHVKCVKMLLENGADPTIETD), and 279 to 312 (SGYNSMDLAVALGYRGVQQAIESHLLKLLQNIRE).

In terms of assembly, interacts (via ANK repeats) with CCDC8 (via PxLPxI/L motif); mediates the interaction with the 3M complex which is composed of CCDC8, CUL7 and OBSL1. Interacts (via ANK repeats) with HDAC4 (via PxLPxI/L motif). Interacts (via ANK repeats) with HDAC5 (via PxLPxI/L motif). Interacts (via ANK repeats) with LRP2/megalin (via PxLPxI/L motif). Interacts (via ANK repeats) with RFX7 (via PxLPxI/L motif). Interacts with AHRR. Interacts with NEK6.

The protein resides in the cytoplasm. It localises to the cytoskeleton. Its subcellular location is the membrane. Its function is as follows. May regulate the interaction between the 3M complex and the histone deacetylases HDAC4 and HDAC5. May also regulate LRP2/megalin. In Mus musculus (Mouse), this protein is Ankyrin repeat family A protein 2 (Ankra2).